Reading from the N-terminus, the 582-residue chain is Zinc finger protein 614 (582 aa).

In terms of domain architecture, KRAB spans 8 to 79 (LTLEDVAVEF…VAKIQNKNCP (72 aa)). Residues 202–224 (HACIECEQTFLRKSQLIYHENIH) form a C2H2-type 1 zinc finger. The C2H2-type 2; degenerate zinc finger occupies 254 to 278 (KICIPNEYRKGSTVNSRLIAHQQTH). 10 consecutive C2H2-type zinc fingers follow at residues 284 to 306 (YMCS…QRTH), 312 to 334 (YVCN…QRTH), 340 to 362 (YICS…QRTH), 368 to 390 (YICS…QRSH), 396 to 418 (YICS…QRTH), 424 to 446 (YICN…QRTH), 452 to 474 (YECN…ERCH), 480 to 502 (FVCT…QRIH), 508 to 530 (YECN…QRTH), and 536 to 558 (YGCS…KKMH).

The protein belongs to the krueppel C2H2-type zinc-finger protein family.

The protein resides in the nucleus. Its function is as follows. May be involved in transcriptional regulation. This is Zinc finger protein 614 (ZNF614) from Macaca fascicularis (Crab-eating macaque).